A 257-amino-acid polypeptide reads, in one-letter code: Chymotrypsin-like protease VLCTLP (257 aa).

The first 18 residues, 1 to 18 (MVLIRVLANLLLLQLSYA), serve as a signal peptide directing secretion. Residues 19-24 (QKSSEL) constitute a propeptide that is removed on maturation. Residues 25–248 (VVGGDECNIN…YSDWIQSIIA (224 aa)) form the Peptidase S1 domain. Cystine bridges form between cysteine 31–cysteine 162, cysteine 49–cysteine 65, cysteine 97–cysteine 255, cysteine 141–cysteine 209, cysteine 173–cysteine 188, and cysteine 199–cysteine 224. Residue asparagine 44 is glycosylated (N-linked (GlcNAc...) asparagine). Histidine 64 functions as the Charge relay system in the catalytic mechanism. Residue asparagine 100 is glycosylated (N-linked (GlcNAc...) asparagine). The active-site Charge relay system is aspartate 109. Asparagine 116 and asparagine 153 each carry an N-linked (GlcNAc...) asparagine glycan. Serine 203 (charge relay system) is an active-site residue. Asparagine 250 carries an N-linked (GlcNAc...) asparagine glycan.

Belongs to the peptidase S1 family. Snake venom subfamily. As to quaternary structure, monomer. Post-translationally, partial deglycosylation has not effect on enzyme activity. In terms of tissue distribution, expressed by the venom gland.

The protein localises to the secreted. Inhibited by PMSF. In terms of biological role, snake venom serine protease with tyrosine-specific chymotrypsin-like activity. Hydrolyzes the N-acetyl-L-tyrosine ethyl ester (ATEE). Has weak fibrinogenolytic activity. Weakly hydrolyzes azocasein, Aalpha-chain (FGA) and more slowly Bbeta-chain (FGB) of fibrinogen. Optimal substrates are angiotensins I and II (AGT). The protein is Chymotrypsin-like protease VLCTLP of Macrovipera lebetinus (Levantine viper).